We begin with the raw amino-acid sequence, 959 residues long: Lon protease homolog, mitochondrial (959 aa).

The transit peptide at 1–67 directs the protein to the mitochondrion; it reads MAASTGYVRL…GPAIGGQWRG (67 aa). 2 disordered regions span residues 77–102 and 218–257; these read GAFSGGEDASEGGAEEGAGGAGGSAG and RQLEVEPEEPEAENKHKPRRKSKRGKKEAEDELSARHPAE. The segment covering 91–102 has biased composition (gly residues); it reads EEGAGGAGGSAG. In terms of domain architecture, Lon N-terminal spans 124 to 370; that stretch reads LPLIAITRNP…KALSLLKKEF (247 aa). The segment covering 233-243 has biased composition (basic residues); sequence HKPRRKSKRGK. A compositionally biased stretch (basic and acidic residues) spans 244–256; that stretch reads KEAEDELSARHPA. 523–530 contributes to the ATP binding site; sequence GPPGVGKT. Residues 759–949 enclose the Lon proteolytic domain; it reads VTPPGVVMGL…REIFDIAFPD (191 aa). Residues Ser855 and Lys898 contribute to the active site.

Belongs to the peptidase S16 family. As to quaternary structure, homohexamer. Organized in a ring with a central cavity. The ATP-binding and proteolytic domains (AP-domain) form a hexameric chamber, while the N-terminal domain is arranged as a trimer of dimers. DNA and RNA binding is stimulated by substrate and inhibited by ATP binding. Interacts with TWNK and mitochondrial DNA polymerase subunit POLG. Duodenum, heart, lung and liver, but not thymus.

The protein resides in the mitochondrion matrix. It catalyses the reaction Hydrolysis of proteins in presence of ATP.. With respect to regulation, peptidase activity is subject to substrate inhibition by ATP. In terms of biological role, ATP-dependent serine protease that mediates the selective degradation of misfolded, unassembled or oxidatively damaged polypeptides as well as certain short-lived regulatory proteins in the mitochondrial matrix. Endogenous substrates include mitochondrial steroidogenic acute regulatory (StAR) protein, DELE1, helicase Twinkle (TWNK) and the large ribosomal subunit protein MRPL32/bL32m. MRPL32/bL32m is protected from degradation by LONP1 when it is bound to a nucleic acid (RNA), but TWNK is not. May also have a chaperone function in the assembly of inner membrane protein complexes. Participates in the regulation of mitochondrial gene expression and in the maintenance of the integrity of the mitochondrial genome. Binds to mitochondrial promoters and RNA in a single-stranded, site-specific, and strand-specific manner. May regulate mitochondrial DNA replication and/or gene expression using site-specific, single-stranded DNA binding to target the degradation of regulatory proteins binding to adjacent sites in mitochondrial promoters. This Homo sapiens (Human) protein is Lon protease homolog, mitochondrial.